Consider the following 148-residue polypeptide: Small ribosomal subunit protein uS15 (148 aa).

This sequence belongs to the universal ribosomal protein uS15 family.

The sequence is that of Small ribosomal subunit protein uS15 (RPS13) from Encephalitozoon cuniculi (strain GB-M1) (Microsporidian parasite).